Consider the following 165-residue polypeptide: 6,7-dimethyl-8-ribityllumazine synthase (165 aa).

5-amino-6-(D-ribitylamino)uracil is bound by residues Trp-26, 58–60, and 80–82; these read SIE and VVI. A (2S)-2-hydroxy-3-oxobutyl phosphate-binding site is contributed by 85 to 86; that stretch reads GT. Catalysis depends on His-88, which acts as the Proton donor. Asn-113 contributes to the 5-amino-6-(D-ribitylamino)uracil binding site. Arg-127 contacts (2S)-2-hydroxy-3-oxobutyl phosphate.

The protein belongs to the DMRL synthase family.

It carries out the reaction (2S)-2-hydroxy-3-oxobutyl phosphate + 5-amino-6-(D-ribitylamino)uracil = 6,7-dimethyl-8-(1-D-ribityl)lumazine + phosphate + 2 H2O + H(+). It functions in the pathway cofactor biosynthesis; riboflavin biosynthesis; riboflavin from 2-hydroxy-3-oxobutyl phosphate and 5-amino-6-(D-ribitylamino)uracil: step 1/2. Its function is as follows. Catalyzes the formation of 6,7-dimethyl-8-ribityllumazine by condensation of 5-amino-6-(D-ribitylamino)uracil with 3,4-dihydroxy-2-butanone 4-phosphate. This is the penultimate step in the biosynthesis of riboflavin. In Saccharopolyspora erythraea (strain ATCC 11635 / DSM 40517 / JCM 4748 / NBRC 13426 / NCIMB 8594 / NRRL 2338), this protein is 6,7-dimethyl-8-ribityllumazine synthase.